The primary structure comprises 451 residues: TERF1-interacting nuclear factor 2 (451 aa).

Ala2 is subject to N-acetylalanine. The segment at 229 to 257 (NPLPKAKPGTHLPQGPSSRTHPEPLAGRH) is disordered. The TBM motif lies at 256-278 (RHFNLAPLGRRRVQSQWASTRGG). Positions 262–268 (PLGRRRV) match the Nuclear localization signal motif. The residue at position 295 (Ser295) is a Phosphoserine. Residues Lys302, Lys306, Lys341, and Lys353 each participate in a glycyl lysine isopeptide (Lys-Gly) (interchain with G-Cter in SUMO2) cross-link.

Monomer. Found in a complex with POT1; TERF1 and TNKS1. Component of the shelterin complex (telosome) composed of TERF1, TERF2, TINF2, TERF2IP ACD and POT1. Interacts with TERF1, TERF2 and ACD. As to expression, detected in heart, brain, placenta, lung, liver, skeletal muscle, kidney and pancreas.

It localises to the nucleus. It is found in the chromosome. The protein localises to the telomere. The protein resides in the nucleus matrix. Component of the shelterin complex (telosome) that is involved in the regulation of telomere length and protection. Shelterin associates with arrays of double-stranded TTAGGG repeats added by telomerase and protects chromosome ends; without its protective activity, telomeres are no longer hidden from the DNA damage surveillance and chromosome ends are inappropriately processed by DNA repair pathways. Plays a role in shelterin complex assembly. Isoform 1 may have additional role in tethering telomeres to the nuclear matrix. The protein is TERF1-interacting nuclear factor 2 (TINF2) of Homo sapiens (Human).